A 441-amino-acid polypeptide reads, in one-letter code: C-terminal-binding protein 1 (441 aa).

Positions 1 to 70 are interaction with GLIS2 1; sequence MGSSHLLNKG…EIHEKVLNEA (70 aa). NAD(+) contacts are provided by residues Ser100, 180–185, Asp204, 237–243, 264–266, and Asp290; these read IGLGRV, CGLNEHN, and TAR. Arg266 is a catalytic residue. Residues 288–360 are interaction with GLIS2 2; the sequence is ALDVHESEPF…VNKDHLTAAT (73 aa). Residue Glu295 is part of the active site. A Phosphoserine modification is found at Ser300. His315 acts as the Proton donor in catalysis. 315 to 318 provides a ligand contact to NAD(+); that stretch reads HAAW. Residues 409-441 form a disordered region; the sequence is SHGLPPVAHPPHAPSPGQTVKPEADRDHTSDQL. Ser423 carries the post-translational modification Phosphoserine. Lys429 participates in a covalent cross-link: Glycyl lysine isopeptide (Lys-Gly) (interchain with G-Cter in SUMO). The segment covering 430–441 has biased composition (basic and acidic residues); it reads PEADRDHTSDQL.

The protein belongs to the D-isomer specific 2-hydroxyacid dehydrogenase family. As to quaternary structure, homo- or heterodimer. Heterodimer with CTBP2. Interacts with ELK3 (via its PXDLS motif). Interacts with RBBP8 (via its PXDLS motif). Interacts with PNN, MECOM and ZFHX1B. Interacts with ZNF366 (via PXDLS motif). Interaction with SATB1 (non-acetylated form); the interaction stabilizes its attachment to DNA and promotes transcription repression. Interacts with PRDM16; the interaction represses white adipose tissue (WAT)-specific genes expression. Interacts with GLIS2, HIPK2, FOXP1, FOXP2, HDAC4, HDAC5, HDAC9, NRIP1, WIZ and ZNF217. Interacts with BCL6; the interaction is required for BCL6 transcriptional autoinhibition and inhibition of some BCL6 target genes. Interacts with IKZF4. Interacts with MCRIP1 (unphosphorylated form, via the PXDLS motif); competitively inhibiting CTBP-ZEB1 interaction. Interacts with Bassoon/BSN; this interaction targets and anchors CTBP1 to presynapses. Interacts with SIMC1. Requires NAD(+) as cofactor. ADP-ribosylated; when cells are exposed to brefeldin A. Post-translationally, the level of phosphorylation appears to be regulated during the cell cycle. Phosphorylation by HIPK2 on Ser-423 induces proteasomal degradation. In terms of processing, sumoylation on Lys-429 is promoted by the E3 SUMO-protein ligase CBX4. Expressed in a wide range of adult tissues.

The protein resides in the cytoplasm. Its subcellular location is the nucleus. Corepressor targeting diverse transcription regulators such as GLIS2 or BCL6. Has dehydrogenase activity. Involved in controlling the equilibrium between tubular and stacked structures in the Golgi complex. Functions in brown adipose tissue (BAT) differentiation. This is C-terminal-binding protein 1 (Ctbp1) from Mus musculus (Mouse).